We begin with the raw amino-acid sequence, 283 residues long: BTB/POZ domain-containing protein KCTD15 (283 aa).

The disordered stretch occupies residues 1 to 33 (MPHRKERPSGSSLNAHGSSGTAEGGNMSRLSLT). Positions 9–21 (SGSSLNAHGSSGT) are enriched in polar residues. Phosphoserine occurs at positions 31, 35, and 38. Positions 56–126 (APVHIDVGGH…LRTSKLLLPD (71 aa)) constitute a BTB domain.

In terms of assembly, forms oligomers, predominantly homopentamers. Interacts with KCTD1, probably forming heteropentamers depending on its abundance in a cell-type dependent manner. Interacts with TFAP2A; this interaction inhibits TFAP2A transcriptional activation. In terms of tissue distribution, expressed in the cerebral cortex, cerebellum, and hypothalamus (at protein level). Expressed in the arcuate hypothalamic nucleus, the ventromedial hypothalamic nucleus and the accumbens nucleus of the ventral striatum.

The protein localises to the nucleus. Its function is as follows. During embryonic development, interferes with neural crest formation. Inhibits AP2 transcriptional activity by interaction with its activation domain. The protein is BTB/POZ domain-containing protein KCTD15 (Kctd15) of Mus musculus (Mouse).